The following is a 1117-amino-acid chain: ATP-dependent RNA helicase mtr4 (1117 aa).

Positions 19-86 (KSLKEESKNS…DNQDLIPNND (68 aa)) are disordered. Residues 65–79 (SATKRAKIENLKDNQ) are compositionally biased toward basic and acidic residues. Residues 207-363 (IACIERQESV…WITKIHRQPC (157 aa)) form the Helicase ATP-binding domain. 220-227 (AHTSAGKT) is a binding site for ATP. Positions 311–314 (DEIH) match the DEIH box motif. The interval 414–433 (GDDPAAMATKGNAKKGKTGK) is disordered. A Helicase C-terminal domain is found at 441 to 642 (DIYKIVKMIM…LSYNMILNLL (202 aa)).

This sequence belongs to the helicase family. SKI2 subfamily. In terms of assembly, component of the TRAMP complex composed of at least cid14, mtr4, and air1.

It is found in the nucleus. Functionally, component of the TRAMP complex which has a poly(A) RNA polymerase activity and is involved in a post-transcriptional quality control mechanism limiting inappropriate expression of genetic information. Polyadenylation is required for the degradative activity of the exosome on several of its nuclear RNA substrates. Required for heterochromatic gene silencing at centromeric repeats by either exosome- or RNAi-mediated degradation of heterochromatic transcripts. This is ATP-dependent RNA helicase mtr4 (mtr4) from Schizosaccharomyces pombe (strain 972 / ATCC 24843) (Fission yeast).